A 101-amino-acid polypeptide reads, in one-letter code: 2-amino-4-ketopentanoate thiolase alpha subunit (101 aa).

This sequence belongs to the OrtA family. As to quaternary structure, heterodimer with OrtB.

It carries out the reaction D-alanine + acetyl-CoA = (2R)-2-amino-4-oxopentanoate + CoA. Functionally, involved in the ornithine fermentation pathway. Catalyzes the thiolytic cleavage of 2-amino-4-ketopentanoate (AKP) with coenzyme A (CoA) to form acetyl-CoA and alanine. It is strictly specific for AKP. This Unknown prokaryotic organism protein is 2-amino-4-ketopentanoate thiolase alpha subunit.